The sequence spans 253 residues: Geranylgeranylglyceryl phosphate synthase (253 aa).

Mg(2+) contacts are provided by Asp28 and Ser53. Sn-glycerol 1-phosphate contacts are provided by residues 172 to 178, 203 to 204, and 225 to 226; these read YLEAGSG, GG, and GN.

Belongs to the GGGP/HepGP synthase family. Group II subfamily. It depends on Mg(2+) as a cofactor.

It is found in the cytoplasm. The catalysed reaction is sn-glycerol 1-phosphate + (2E,6E,10E)-geranylgeranyl diphosphate = sn-3-O-(geranylgeranyl)glycerol 1-phosphate + diphosphate. The protein operates within membrane lipid metabolism; glycerophospholipid metabolism. In terms of biological role, prenyltransferase that catalyzes the transfer of the geranylgeranyl moiety of geranylgeranyl diphosphate (GGPP) to the C3 hydroxyl of sn-glycerol-1-phosphate (G1P). This reaction is the first ether-bond-formation step in the biosynthesis of archaeal membrane lipids. The sequence is that of Geranylgeranylglyceryl phosphate synthase from Methanocaldococcus jannaschii (strain ATCC 43067 / DSM 2661 / JAL-1 / JCM 10045 / NBRC 100440) (Methanococcus jannaschii).